A 96-amino-acid polypeptide reads, in one-letter code: ATP-dependent Clp protease adapter protein ClpS (96 aa).

Belongs to the ClpS family. Binds to the N-terminal domain of the chaperone ClpA.

Functionally, involved in the modulation of the specificity of the ClpAP-mediated ATP-dependent protein degradation. This Streptomyces coelicolor (strain ATCC BAA-471 / A3(2) / M145) protein is ATP-dependent Clp protease adapter protein ClpS.